A 264-amino-acid chain; its full sequence is Thymidylate synthase (264 aa).

R21 provides a ligand contact to dUMP. (6R)-5,10-methylene-5,6,7,8-tetrahydrofolate is bound at residue H51. R126–R127 lines the dUMP pocket. The Nucleophile role is filled by C146. Residues R166–D169, N177, and H207–Y209 each bind dUMP. D169 serves as a coordination point for (6R)-5,10-methylene-5,6,7,8-tetrahydrofolate. A263 provides a ligand contact to (6R)-5,10-methylene-5,6,7,8-tetrahydrofolate.

Belongs to the thymidylate synthase family. Bacterial-type ThyA subfamily. In terms of assembly, homodimer.

Its subcellular location is the cytoplasm. The catalysed reaction is dUMP + (6R)-5,10-methylene-5,6,7,8-tetrahydrofolate = 7,8-dihydrofolate + dTMP. The protein operates within pyrimidine metabolism; dTTP biosynthesis. In terms of biological role, catalyzes the reductive methylation of 2'-deoxyuridine-5'-monophosphate (dUMP) to 2'-deoxythymidine-5'-monophosphate (dTMP) while utilizing 5,10-methylenetetrahydrofolate (mTHF) as the methyl donor and reductant in the reaction, yielding dihydrofolate (DHF) as a by-product. This enzymatic reaction provides an intracellular de novo source of dTMP, an essential precursor for DNA biosynthesis. The protein is Thymidylate synthase of Nitrosomonas europaea (strain ATCC 19718 / CIP 103999 / KCTC 2705 / NBRC 14298).